The chain runs to 295 residues: Tyrosine recombinase XerC (295 aa).

The 85-residue stretch at 1–85 (MHILLQKYYN…ALRQFLNYLV (85 aa)) folds into the Core-binding (CB) domain. Residues 106–285 (YLPKNMDMEQ…DFQHLAQVYD (180 aa)) enclose the Tyr recombinase domain. Catalysis depends on residues arginine 145, lysine 169, histidine 237, arginine 240, and histidine 263. Tyrosine 272 (O-(3'-phospho-DNA)-tyrosine intermediate) is an active-site residue.

This sequence belongs to the 'phage' integrase family. XerC subfamily. In terms of assembly, forms a cyclic heterotetrameric complex composed of two molecules of XerC and two molecules of XerD.

The protein localises to the cytoplasm. Functionally, site-specific tyrosine recombinase, which acts by catalyzing the cutting and rejoining of the recombining DNA molecules. The XerC-XerD complex is essential to convert dimers of the bacterial chromosome into monomers to permit their segregation at cell division. It also contributes to the segregational stability of plasmids. This Histophilus somni (strain 2336) (Haemophilus somnus) protein is Tyrosine recombinase XerC.